A 515-amino-acid polypeptide reads, in one-letter code: Bifunctional purine biosynthesis protein PurH (515 aa).

The MGS-like domain occupies 1–145 (MTKRALISVS…KNHASVTVVV (145 aa)).

Belongs to the PurH family.

The catalysed reaction is (6R)-10-formyltetrahydrofolate + 5-amino-1-(5-phospho-beta-D-ribosyl)imidazole-4-carboxamide = 5-formamido-1-(5-phospho-D-ribosyl)imidazole-4-carboxamide + (6S)-5,6,7,8-tetrahydrofolate. It catalyses the reaction IMP + H2O = 5-formamido-1-(5-phospho-D-ribosyl)imidazole-4-carboxamide. The protein operates within purine metabolism; IMP biosynthesis via de novo pathway; 5-formamido-1-(5-phospho-D-ribosyl)imidazole-4-carboxamide from 5-amino-1-(5-phospho-D-ribosyl)imidazole-4-carboxamide (10-formyl THF route): step 1/1. It participates in purine metabolism; IMP biosynthesis via de novo pathway; IMP from 5-formamido-1-(5-phospho-D-ribosyl)imidazole-4-carboxamide: step 1/1. The polypeptide is Bifunctional purine biosynthesis protein PurH (Streptococcus agalactiae serotype Ia (strain ATCC 27591 / A909 / CDC SS700)).